Reading from the N-terminus, the 238-residue chain is MAASALSTCLWMLVLGTCVSLVVGTDCGKECALCVYRLLGQQSTLSSLTCSLECDGGLDSQKLRLCQDVLLEEENQSPLASQQDQERVDAMMADEEDATSPEHQMAKKYGGFMKRYGGFMSRRSSASSLEEAGNQDEEQSIRTEILKILNAATEHGGEGDGQEAEAVKRYGGFMRRADRGAAQGNLVEAVLGRVLKKRYGGFMRRVGRPEWLVDSSKKVGVLKENGSELQKRHGGFMD.

The N-terminal stretch at 1-25 (MAASALSTCLWMLVLGTCVSLVVGT) is a signal peptide. 3 disulfide bridges follow: C27/C50, C31/C54, and C34/C66. Positions 76–103 (QSPLASQQDQERVDAMMADEEDATSPEH) are disordered. 3 consecutive propeptides follow at residues 124-167 (SSAS…AEAV), 177-195 (ADRGAAQGNLVEAVLGRVL), and 206-230 (VGRPEWLVDSSKKVGVLKENGSELQ).

It belongs to the opioid neuropeptide precursor family. Expressed by the venom gland. Moderately expressed in the venom gland transcriptome.

It is found in the secreted. Functionally, met-enkephalins compete with and mimic the effects of opiate drugs. They play a role in a number of physiologic functions, including pain perception and responses to stress. Enkephalin peptides found in Meiacanthus fangblennies induce physiological effects via their interaction with delta-type opioid receptors (OPRD1) (tested on M.grammistes). Therefore, finding a proenkephalin sequence in M.atrodorsalis venom suggests that this protein act in the same manner. This is Proenkephalin-A from Meiacanthus atrodorsalis (Forktail blenny).